Reading from the N-terminus, the 454-residue chain is Tyrosine aminotransferase (454 aa).

The residue at position 1 (methionine 1) is an N-acetylmethionine. Lysine 280 is subject to N6-(pyridoxal phosphate)lysine. Serine 448 carries the post-translational modification Phosphoserine.

The protein belongs to the class-I pyridoxal-phosphate-dependent aminotransferase family. In terms of assembly, homodimer. Pyridoxal 5'-phosphate is required as a cofactor.

The catalysed reaction is L-tyrosine + 2-oxoglutarate = 3-(4-hydroxyphenyl)pyruvate + L-glutamate. It functions in the pathway amino-acid degradation; L-phenylalanine degradation; acetoacetate and fumarate from L-phenylalanine: step 2/6. Its function is as follows. Transaminase involved in tyrosine breakdown. Converts tyrosine to p-hydroxyphenylpyruvate. Can catalyze the reverse reaction, using glutamic acid, with 2-oxoglutarate as cosubstrate (in vitro). Has much lower affinity and transaminase activity for phenylalanine. This is Tyrosine aminotransferase (Tat) from Mus musculus (Mouse).